Consider the following 168-residue polypeptide: G/U mismatch-specific DNA glycosylase (168 aa).

The protein belongs to the uracil-DNA glycosylase (UDG) superfamily. TDG/mug family. Binds DNA as a monomer.

The protein resides in the cytoplasm. The catalysed reaction is Specifically hydrolyzes mismatched double-stranded DNA and polynucleotides, releasing free uracil.. Its function is as follows. Excises ethenocytosine and uracil, which can arise by alkylation or deamination of cytosine, respectively, from the corresponding mispairs with guanine in ds-DNA. It is capable of hydrolyzing the carbon-nitrogen bond between the sugar-phosphate backbone of the DNA and the mispaired base. The complementary strand guanine functions in substrate recognition. Required for DNA damage lesion repair in stationary-phase cells. In Klebsiella pneumoniae (strain 342), this protein is G/U mismatch-specific DNA glycosylase.